The chain runs to 101 residues: Chaperone modulatory protein CbpM (101 aa).

It belongs to the CbpM family.

Its function is as follows. Interacts with CbpA and inhibits both the DnaJ-like co-chaperone activity and the DNA binding activity of CbpA. Together with CbpA, modulates the activity of the DnaK chaperone system. Does not inhibit the co-chaperone activity of DnaJ. The chain is Chaperone modulatory protein CbpM from Escherichia coli (strain K12 / MC4100 / BW2952).